Consider the following 160-residue polypeptide: 6,7-dimethyl-8-ribityllumazine synthase (160 aa).

5-amino-6-(D-ribitylamino)uracil-binding positions include tryptophan 31, 65–67, and 89–91; these read SFE and CVV. (2S)-2-hydroxy-3-oxobutyl phosphate is bound at residue 94–95; it reads DT. Histidine 97 acts as the Proton donor in catalysis. Phenylalanine 122 is a 5-amino-6-(D-ribitylamino)uracil binding site. Arginine 136 is a (2S)-2-hydroxy-3-oxobutyl phosphate binding site.

This sequence belongs to the DMRL synthase family.

It catalyses the reaction (2S)-2-hydroxy-3-oxobutyl phosphate + 5-amino-6-(D-ribitylamino)uracil = 6,7-dimethyl-8-(1-D-ribityl)lumazine + phosphate + 2 H2O + H(+). It functions in the pathway cofactor biosynthesis; riboflavin biosynthesis; riboflavin from 2-hydroxy-3-oxobutyl phosphate and 5-amino-6-(D-ribitylamino)uracil: step 1/2. Catalyzes the formation of 6,7-dimethyl-8-ribityllumazine by condensation of 5-amino-6-(D-ribitylamino)uracil with 3,4-dihydroxy-2-butanone 4-phosphate. This is the penultimate step in the biosynthesis of riboflavin. The chain is 6,7-dimethyl-8-ribityllumazine synthase from Parabacteroides distasonis (strain ATCC 8503 / DSM 20701 / CIP 104284 / JCM 5825 / NCTC 11152).